The following is a 344-amino-acid chain: tRNA N6-adenosine threonylcarbamoyltransferase (344 aa).

Positions 116 and 120 each coordinate Fe cation. Residues Leu138–Gly142, Asp171, Gly184, Asp188, and Asn277 contribute to the substrate site. Position 307 (Asp307) interacts with Fe cation.

This sequence belongs to the KAE1 / TsaD family. It depends on Fe(2+) as a cofactor.

The protein localises to the cytoplasm. It catalyses the reaction L-threonylcarbamoyladenylate + adenosine(37) in tRNA = N(6)-L-threonylcarbamoyladenosine(37) in tRNA + AMP + H(+). In terms of biological role, required for the formation of a threonylcarbamoyl group on adenosine at position 37 (t(6)A37) in tRNAs that read codons beginning with adenine. Is involved in the transfer of the threonylcarbamoyl moiety of threonylcarbamoyl-AMP (TC-AMP) to the N6 group of A37, together with TsaE and TsaB. TsaD likely plays a direct catalytic role in this reaction. This Latilactobacillus sakei subsp. sakei (strain 23K) (Lactobacillus sakei subsp. sakei) protein is tRNA N6-adenosine threonylcarbamoyltransferase.